Here is a 498-residue protein sequence, read N- to C-terminus: ATP synthase subunit beta, chloroplastic (498 aa).

ATP is bound at residue 172–179 (GGAGVGKT).

It belongs to the ATPase alpha/beta chains family. As to quaternary structure, F-type ATPases have 2 components, CF(1) - the catalytic core - and CF(0) - the membrane proton channel. CF(1) has five subunits: alpha(3), beta(3), gamma(1), delta(1), epsilon(1). CF(0) has four main subunits: a(1), b(1), b'(1) and c(9-12).

The protein resides in the plastid. It localises to the chloroplast thylakoid membrane. The catalysed reaction is ATP + H2O + 4 H(+)(in) = ADP + phosphate + 5 H(+)(out). Its function is as follows. Produces ATP from ADP in the presence of a proton gradient across the membrane. The catalytic sites are hosted primarily by the beta subunits. This Lolium perenne (Perennial ryegrass) protein is ATP synthase subunit beta, chloroplastic.